The sequence spans 153 residues: Pheromone-binding protein Gp-9 (153 aa).

An N-terminal signal peptide occupies residues Met-1–Ala-19. 3 disulfide bridges follow: Cys-37-Cys-77, Cys-73-Cys-129, and Cys-118-Cys-138.

The protein belongs to the PBP/GOBP family. As to quaternary structure, homodimer.

It is found in the secreted. In terms of biological role, colony queen number, a major feature of social organization, is associated with worker genotype for Gp-9. Colonies are headed by either a single reproductive queen (monogyne form) or multiple queens (polygyne form). Differences in worker Gp-9 genotypes between social forms may cause differences in workers' abilities to recognize queens and regulate their numbers. The protein is Pheromone-binding protein Gp-9 of Solenopsis electra (Fire ant).